A 234-amino-acid polypeptide reads, in one-letter code: MKLLVSPINSEEAIIASIGGADIVDVKNPKEGSLGANFPWVIREVKAVVNGRQPISATIGDFNYKPGTAALAALGAAVAGADYIKVGLYDIQTESQALELLTKITRAVKDYNPLKKVVASGYSDYKRINSISPLLLPAVAAEAGVDVVMVDTGVKDGKSTFEFMDEKELKEFTDLAHSYGLENAIAGSLKFEDIPLLERIGPDIIGVRGMVCGGDRSTSIRQELVEKLVAECQA.

The Schiff-base intermediate with substrate role is filled by K27. Catalysis depends on K85, which acts as the Proton acceptor.

The protein belongs to the MfnB family.

It catalyses the reaction 2 D-glyceraldehyde 3-phosphate = 4-(hydroxymethyl)-2-furancarboxaldehyde phosphate + phosphate + 2 H2O. It functions in the pathway cofactor biosynthesis; methanofuran biosynthesis. In terms of biological role, catalyzes the formation of 4-(hydroxymethyl)-2-furancarboxaldehyde phosphate (4-HFC-P) from two molecules of glyceraldehyde-3-P (GA-3-P). This is (5-formylfuran-3-yl)methyl phosphate synthase from Methanosarcina mazei (strain ATCC BAA-159 / DSM 3647 / Goe1 / Go1 / JCM 11833 / OCM 88) (Methanosarcina frisia).